The sequence spans 140 residues: Large ribosomal subunit protein uL11 (140 aa).

Belongs to the universal ribosomal protein uL11 family. In terms of assembly, part of the ribosomal stalk of the 50S ribosomal subunit. Interacts with L10 and the large rRNA to form the base of the stalk. L10 forms an elongated spine to which L12 dimers bind in a sequential fashion forming a multimeric L10(L12)X complex. In terms of processing, one or more lysine residues are methylated.

In terms of biological role, forms part of the ribosomal stalk which helps the ribosome interact with GTP-bound translation factors. The polypeptide is Large ribosomal subunit protein uL11 (Geobacter metallireducens (strain ATCC 53774 / DSM 7210 / GS-15)).